The primary structure comprises 251 residues: MELDLGLSLSPHKSSKLGFNFDLNKHCAIEGAASCLGTEKLRFEATFGLGNVEENCYMPKQRLFALNGQPNEEDEDPLESESSIVYDDEEENSEVVGWPPVKTCMIKYGSYHHRHIRNHHHCPYHHRGRRITAMNNNISNPTTATVGSSSSSSISSRSSMYVKVKMDGVAIARKVDIKLFNSYESLTNSLITMFTEYEDCDREDTNYTFTFQGKEGDWLLRGDVTWKIFAESVHRISIIRDRPCAYTRCLF.

The EAR-like (transcriptional repression) motif lies at 3-7; it reads LDLGL. The region spanning 159–246 is the PB1 domain; that stretch reads SMYVKVKMDG…SIIRDRPCAY (88 aa).

The protein belongs to the Aux/IAA family. As to quaternary structure, homodimers and heterodimers.

The protein localises to the nucleus. Functionally, aux/IAA proteins are short-lived transcriptional factors that function as repressors of early auxin response genes at low auxin concentrations. Repression is thought to result from the interaction with auxin response factors (ARFs), proteins that bind to the auxin-responsive promoter element (AuxRE). Formation of heterodimers with ARF proteins may alter their ability to modulate early auxin response genes expression. In Arabidopsis thaliana (Mouse-ear cress), this protein is Auxin-responsive protein IAA29 (IAA29).